The primary structure comprises 376 residues: Bifunctional enzyme IspD/IspF (376 aa).

A 2-C-methyl-D-erythritol 4-phosphate cytidylyltransferase region spans residues 1–220; sequence MRIAAILVAG…RSMSISMIPR (220 aa). Residues 220–376 form a 2-C-methyl-D-erythritol 2,4-cyclodiphosphate synthase region; that stretch reads RIGTGYDVHA…QAAVIIMIPA (157 aa). Positions 226 and 228 each coordinate a divalent metal cation. Residues 226–228 and 252–253 each bind 4-CDP-2-C-methyl-D-erythritol 2-phosphate; these read DVH and HS. H260 contributes to the a divalent metal cation binding site. Residues 274–276, 350–353, F357, and R360 each bind 4-CDP-2-C-methyl-D-erythritol 2-phosphate; these read DIG and TTSE.

The protein in the N-terminal section; belongs to the IspD/TarI cytidylyltransferase family. IspD subfamily. It in the C-terminal section; belongs to the IspF family. A divalent metal cation serves as cofactor.

The catalysed reaction is 2-C-methyl-D-erythritol 4-phosphate + CTP + H(+) = 4-CDP-2-C-methyl-D-erythritol + diphosphate. It carries out the reaction 4-CDP-2-C-methyl-D-erythritol 2-phosphate = 2-C-methyl-D-erythritol 2,4-cyclic diphosphate + CMP. It functions in the pathway isoprenoid biosynthesis; isopentenyl diphosphate biosynthesis via DXP pathway; isopentenyl diphosphate from 1-deoxy-D-xylulose 5-phosphate: step 2/6. It participates in isoprenoid biosynthesis; isopentenyl diphosphate biosynthesis via DXP pathway; isopentenyl diphosphate from 1-deoxy-D-xylulose 5-phosphate: step 4/6. Its function is as follows. Bifunctional enzyme that catalyzes the formation of 4-diphosphocytidyl-2-C-methyl-D-erythritol from CTP and 2-C-methyl-D-erythritol 4-phosphate (MEP) (IspD), and catalyzes the conversion of 4-diphosphocytidyl-2-C-methyl-D-erythritol 2-phosphate (CDP-ME2P) to 2-C-methyl-D-erythritol 2,4-cyclodiphosphate (ME-CPP) with a corresponding release of cytidine 5-monophosphate (CMP) (IspF). This Granulibacter bethesdensis (strain ATCC BAA-1260 / CGDNIH1) protein is Bifunctional enzyme IspD/IspF.